The following is a 452-amino-acid chain: MENNNNNNNNNNNNNNNNNNIVLLKCVSQNYEWGKYGSNSTVAKLLKGYAKECSDIIKETIPYAELWMGDHVSAPSKVEYKNKELKLREYIDTVQKEINEKSSTSSSSSSSIRGEIVEKRFGNDFPFLFKVLSIRTALSIQAHPDSQLAQVLFKKYPNIYKDPYHKPEIAIATTPFEALCSFRPLSEIQSFIDTIPEFKNSLPNNLIKLDDCKEYLKSIVTSLLKADGLLISNNLKELNNRLNEKREEERDDLDRLVLKLYSQYPGDVGVFFAYILNYIVLKPGEALFLGAGEPHAYISGDCVECMAPSDNVVRAGLTPKLKDVDTLGDMLTYRTGRPDLVVPQQRPDLSLTNYRCYQPPVDEFQVEYYHLDDCCKNINVYSSKGPSIVLVYSGNLSIENKSNQSTLNNLHTGSILFVPANTDYQFIQSDSSIPVSIYVASVSNRIFNKNNL.

Positions 141, 143, 168, and 295 each coordinate Zn(2+). The active site involves arginine 314.

This sequence belongs to the mannose-6-phosphate isomerase type 1 family. Zn(2+) serves as cofactor.

The protein resides in the cytoplasm. The enzyme catalyses D-mannose 6-phosphate = D-fructose 6-phosphate. It functions in the pathway nucleotide-sugar biosynthesis; GDP-alpha-D-mannose biosynthesis; alpha-D-mannose 1-phosphate from D-fructose 6-phosphate: step 1/2. Involved in the synthesis of the GDP-mannose and dolichol-phosphate-mannose required for a number of critical mannosyl transfer reactions. The polypeptide is Probable mannose-6-phosphate isomerase (mpi) (Dictyostelium discoideum (Social amoeba)).